A 679-amino-acid polypeptide reads, in one-letter code: Genome polyprotein (679 aa).

A propeptide spans 1–14 (SAGMIIMLIPTVMA) (ER anchor for the capsid protein C, removed in mature form by serine protease NS3). A helical transmembrane segment spans residues 2 to 22 (AGMIIMLIPTVMAFHLTTRNG). Residues 23–138 (EPHMIVSRQE…GAWKHAQRIE (116 aa)) lie on the Extracellular side of the membrane. N-linked (GlcNAc...) asparagine; by host glycosylation occurs at Asn83. The chain crosses the membrane as a helical span at residues 139-159 (IWILRHPGFTIMAAILAYTIG). At 160–165 (TTHFQR) the chain is on the cytoplasmic side. Residues 166–180 (ALIFILLTAVAPSMT) form a helical membrane-spanning segment. Over 181–625 (MRCIGISNRD…LHQVFGAIYG (445 aa)) the chain is Extracellular. 4 cysteine pairs are disulfide-bonded: Cys183–Cys210, Cys240–Cys301, Cys254–Cys285, and Cys272–Cys296. Asn247 is a glycosylation site (N-linked (GlcNAc...) asparagine; by host). Residues 278 to 291 (DRGWGNGCGLFGKG) are fusion peptide. An N-linked (GlcNAc...) asparagine; by host glycan is attached at Asn333. 2 disulfide bridges follow: Cys365–Cys465 and Cys482–Cys513. Residues 626–646 (AAFSGVSWTMKILIGVIITWI) form a helical membrane-spanning segment. At 647-652 (GMNSRS) the chain is on the cytoplasmic side. A helical transmembrane segment spans residues 653–673 (TSLSVSLVLVGIVTLYLGVMV). The Extracellular portion of the chain corresponds to 674–679 (QADSGC).

As to quaternary structure, forms heterodimers with envelope protein E in the endoplasmic reticulum and Golgi. In terms of assembly, homodimer; in the endoplasmic reticulum and Golgi. Interacts with protein prM. Interacts with non-structural protein 1. In terms of processing, cleaved in post-Golgi vesicles by a host furin, releasing the mature small envelope protein M, and peptide pr. This cleavage is incomplete as up to 30% of viral particles still carry uncleaved prM. N-glycosylated. Post-translationally, N-glycosylated. The excreted form is glycosylated and this is required for efficient secretion of the protein from infected cells. In terms of processing, specific enzymatic cleavages in vivo yield mature proteins. Cleavages in the lumen of endoplasmic reticulum are performed by host signal peptidase, wereas cleavages in the cytoplasmic side are performed by serine protease NS3. Signal cleavage at the 2K-4B site requires a prior NS3 protease-mediated cleavage at the 4A-2K site.

The protein localises to the secreted. It is found in the virion membrane. It localises to the host endoplasmic reticulum membrane. Its function is as follows. Prevents premature fusion activity of envelope proteins in trans-Golgi by binding to envelope protein E at pH6.0. After virion release in extracellular space, gets dissociated from E dimers. Functionally, acts as a chaperone for envelope protein E during intracellular virion assembly by masking and inactivating envelope protein E fusion peptide. prM is the only viral peptide matured by host furin in the trans-Golgi network probably to avoid catastrophic activation of the viral fusion activity in acidic Golgi compartment prior to virion release. prM-E cleavage is inefficient, and many virions are only partially matured. These uncleaved prM would play a role in immune evasion. In terms of biological role, may play a role in virus budding. Exerts cytotoxic effects by activating a mitochondrial apoptotic pathway through M ectodomain. May display a viroporin activity. Binds to host cell surface receptor and mediates fusion between viral and cellular membranes. Envelope protein is synthesized in the endoplasmic reticulum in the form of heterodimer with protein prM. They play a role in virion budding in the ER, and the newly formed immature particle is covered with 60 spikes composed of heterodimer between precursor prM and envelope protein E. The virion is transported to the Golgi apparatus where the low pH causes dissociation of PrM-E heterodimers and formation of E homodimers. prM-E cleavage is inefficient, and many virions are only partially matured. These uncleaved prM would play a role in immune evasion. Its function is as follows. Involved in immune evasion, pathogenesis and viral replication. Once cleaved off the polyprotein, is targeted to three destinations: the viral replication cycle, the plasma membrane and the extracellular compartment. Essential for viral replication. Required for formation of the replication complex and recruitment of other non-structural proteins to the ER-derived membrane structures. Excreted as a hexameric lipoparticle that plays a role against host immune response. Antagonizing the complement function. Binds to the host macrophages and dendritic cells. Inhibits signal transduction originating from Toll-like receptor 3 (TLR3). Functionally, disrupts the host endothelial glycocalyx layer of host pulmonary microvascular endothelial cells, inducing degradation of sialic acid and shedding of heparan sulfate proteoglycans. NS1 induces expression of sialidases, heparanase, and activates cathepsin L, which activates heparanase via enzymatic cleavage. These effects are probably linked to the endothelial hyperpermeability observed in severe dengue disease. The protein is Genome polyprotein of Dengue virus type 2 (strain Thailand/PUO-218/1980) (DENV-2).